Reading from the N-terminus, the 232-residue chain is Phosphatidylserine decarboxylase proenzyme (232 aa).

Ser-190 serves as the catalytic Schiff-base intermediate with substrate; via pyruvic acid. Ser-190 is modified (pyruvic acid (Ser); by autocatalysis).

It belongs to the phosphatidylserine decarboxylase family. PSD-A subfamily. Heterodimer of a large membrane-associated beta subunit and a small pyruvoyl-containing alpha subunit. It depends on pyruvate as a cofactor. Is synthesized initially as an inactive proenzyme. Formation of the active enzyme involves a self-maturation process in which the active site pyruvoyl group is generated from an internal serine residue via an autocatalytic post-translational modification. Two non-identical subunits are generated from the proenzyme in this reaction, and the pyruvate is formed at the N-terminus of the alpha chain, which is derived from the carboxyl end of the proenzyme. The post-translation cleavage follows an unusual pathway, termed non-hydrolytic serinolysis, in which the side chain hydroxyl group of the serine supplies its oxygen atom to form the C-terminus of the beta chain, while the remainder of the serine residue undergoes an oxidative deamination to produce ammonia and the pyruvoyl prosthetic group on the alpha chain.

The protein resides in the cell membrane. It catalyses the reaction a 1,2-diacyl-sn-glycero-3-phospho-L-serine + H(+) = a 1,2-diacyl-sn-glycero-3-phosphoethanolamine + CO2. The protein operates within phospholipid metabolism; phosphatidylethanolamine biosynthesis; phosphatidylethanolamine from CDP-diacylglycerol: step 2/2. Its function is as follows. Catalyzes the formation of phosphatidylethanolamine (PtdEtn) from phosphatidylserine (PtdSer). This Mesorhizobium japonicum (strain LMG 29417 / CECT 9101 / MAFF 303099) (Mesorhizobium loti (strain MAFF 303099)) protein is Phosphatidylserine decarboxylase proenzyme.